The sequence spans 417 residues: Gamma-glutamyl phosphate reductase (417 aa).

This sequence belongs to the gamma-glutamyl phosphate reductase family.

The protein localises to the cytoplasm. It catalyses the reaction L-glutamate 5-semialdehyde + phosphate + NADP(+) = L-glutamyl 5-phosphate + NADPH + H(+). The protein operates within amino-acid biosynthesis; L-proline biosynthesis; L-glutamate 5-semialdehyde from L-glutamate: step 2/2. Its function is as follows. Catalyzes the NADPH-dependent reduction of L-glutamate 5-phosphate into L-glutamate 5-semialdehyde and phosphate. The product spontaneously undergoes cyclization to form 1-pyrroline-5-carboxylate. The chain is Gamma-glutamyl phosphate reductase from Legionella pneumophila (strain Paris).